A 115-amino-acid polypeptide reads, in one-letter code: MKYLIVCVTLALFAYINASPAYGNRGGYGGGYGGGYGPVQRVVYEEVPAYGPSRGYNSYPRSLRSEGNGGSAAAAAAASAAAVNPGTYKQYAIPSYELDGARGYEIGHGYGQRAY.

The first 18 residues, 1 to 18, serve as a signal peptide directing secretion; it reads MKYLIVCVTLALFAYINA.

The protein belongs to the chorion protein S15/S18 family.

It localises to the secreted. In terms of biological role, chorion membrane (egg shell) protein; plays a role in protecting the egg from the environment. The chain is Chorion protein S15 (Cp15) from Drosophila melanogaster (Fruit fly).